Consider the following 124-residue polypeptide: Small ribosomal subunit protein uS12 (124 aa).

Residues Met-1–Pro-22 form a disordered region. The residue at position 89 (Asp-89) is a 3-methylthioaspartic acid. A disordered region spans residues Thr-104 to Ser-124. Residues Gly-113–Ser-124 show a composition bias toward basic residues.

This sequence belongs to the universal ribosomal protein uS12 family. In terms of assembly, part of the 30S ribosomal subunit. Contacts proteins S8 and S17. May interact with IF1 in the 30S initiation complex.

Functionally, with S4 and S5 plays an important role in translational accuracy. Its function is as follows. Interacts with and stabilizes bases of the 16S rRNA that are involved in tRNA selection in the A site and with the mRNA backbone. Located at the interface of the 30S and 50S subunits, it traverses the body of the 30S subunit contacting proteins on the other side and probably holding the rRNA structure together. The combined cluster of proteins S8, S12 and S17 appears to hold together the shoulder and platform of the 30S subunit. The polypeptide is Small ribosomal subunit protein uS12 (Hahella chejuensis (strain KCTC 2396)).